The primary structure comprises 93 residues: Small ribosomal subunit protein uS19 (93 aa).

The protein belongs to the universal ribosomal protein uS19 family.

Functionally, protein S19 forms a complex with S13 that binds strongly to the 16S ribosomal RNA. The protein is Small ribosomal subunit protein uS19 of Limosilactobacillus fermentum (strain NBRC 3956 / LMG 18251) (Lactobacillus fermentum).